A 269-amino-acid chain; its full sequence is Type II iodothyronine deiodinase (269 aa).

Residues 1-7 are Lumenal-facing; it reads MGLLSVD. A helical; Signal-anchor for type III membrane protein transmembrane segment spans residues 8 to 28; sequence LLITLQILPWFFSNCLFLALY. The Cytoplasmic portion of the chain corresponds to 29–269; the sequence is DSVVLLKHVI…RUVPTCELIM (241 aa). Sec128 is a catalytic residue. Non-standard amino acids (selenocysteine) are located at Sec128 and Sec261.

The protein belongs to the iodothyronine deiodinase family. In terms of assembly, predominantly monomer. Can form homodimers but homodimerization is not essential for enzyme activity.

Its subcellular location is the endoplasmic reticulum membrane. It carries out the reaction 3,3',5-triiodo-L-thyronine + iodide + A + H(+) = L-thyroxine + AH2. The enzyme catalyses 3,3'-diiodo-L-thyronine + iodide + A + H(+) = 3,3',5'-triiodo-L-thyronine + AH2. It catalyses the reaction 3'-iodo-L-thyronine + iodide + A + H(+) = 3',5'-diiodo-L-thyronine + AH2. The catalysed reaction is 3,3'-diiodothyronamine + iodide + A + H(+) = 3,3',5'-triiodothyronamine + AH2. It carries out the reaction 3'-iodothyronamine + iodide + A + H(+) = 3',5'-diiodothyronamine + AH2. In terms of biological role, plays a crucial role in the metabolism of thyroid hormones (TH) and has specific roles in TH activation and inactivation by deiodination. Catalyzes the deiodination of L-thyroxine (T4) to 3,5,3'-triiodothyronine (T3), 3,3',5'-triiodothyronine (rT3) to 3,3'-diiodothyronine (3,3'-T2) and 3',5'-diiodothyronine (3',5'-T2) to 3'-monoiodothyronine (3'-T1) via outer-ring deiodination (ORD). Catalyzes the phenolic ring deiodinations of 3,3',5'-triiodothyronamine and 3',5'- diiodothyronamine. In Neoceratodus forsteri (Australian lungfish), this protein is Type II iodothyronine deiodinase (dio2).